The chain runs to 758 residues: 5-methyltetrahydropteroyltriglutamate--homocysteine methyltransferase (758 aa).

Residues 16-19 (RELK) and Lys-116 each bind 5-methyltetrahydropteroyltri-L-glutamate. L-homocysteine is bound by residues 436–438 (IGS) and Glu-489. Residues 436–438 (IGS) and Glu-489 each bind L-methionine. 5-methyltetrahydropteroyltri-L-glutamate contacts are provided by residues 520 to 521 (RC) and Trp-566. Residue Asp-604 coordinates L-homocysteine. Asp-604 contributes to the L-methionine binding site. Position 610 (Glu-610) interacts with 5-methyltetrahydropteroyltri-L-glutamate. 3 residues coordinate Zn(2+): His-646, Cys-648, and Glu-670. His-699 acts as the Proton donor in catalysis. Cys-731 contacts Zn(2+).

Belongs to the vitamin-B12 independent methionine synthase family. Zn(2+) serves as cofactor.

The catalysed reaction is 5-methyltetrahydropteroyltri-L-glutamate + L-homocysteine = tetrahydropteroyltri-L-glutamate + L-methionine. The protein operates within amino-acid biosynthesis; L-methionine biosynthesis via de novo pathway; L-methionine from L-homocysteine (MetE route): step 1/1. Functionally, catalyzes the transfer of a methyl group from 5-methyltetrahydrofolate to homocysteine resulting in methionine formation. This chain is 5-methyltetrahydropteroyltriglutamate--homocysteine methyltransferase, found in Xylella fastidiosa (strain 9a5c).